The following is a 249-amino-acid chain: MLQKVTGIVVRTVNYGESNKVVTLFTEELGKVAIMARGAKKPGSRFHASSQPFVEGVYIFPSSRGLAQLKSSDVMTSYPEIRKDVERMAYAMYWLELVDRSVEDRVQNRPLFRILQDALQALNAGMDADVITHYVELRILHLLGVAPVLTGCVRCGDVTDPMYFSVASGGFLCARHPEEGVILLSERLAKLLYLMSKHELSEFRNVPLSDESRVLLRQLFDAYMESYSGLRLKTKRVLDQMIRLHLNED.

Belongs to the RecO family.

Its function is as follows. Involved in DNA repair and RecF pathway recombination. This Exiguobacterium sp. (strain ATCC BAA-1283 / AT1b) protein is DNA repair protein RecO.